The following is a 273-amino-acid chain: 2,3,4,5-tetrahydropyridine-2,6-dicarboxylate N-succinyltransferase (273 aa).

Arg104 and Asp141 together coordinate substrate.

This sequence belongs to the transferase hexapeptide repeat family. As to quaternary structure, homotrimer.

The protein resides in the cytoplasm. The enzyme catalyses (S)-2,3,4,5-tetrahydrodipicolinate + succinyl-CoA + H2O = (S)-2-succinylamino-6-oxoheptanedioate + CoA. Its pathway is amino-acid biosynthesis; L-lysine biosynthesis via DAP pathway; LL-2,6-diaminopimelate from (S)-tetrahydrodipicolinate (succinylase route): step 1/3. In Nitrosomonas eutropha (strain DSM 101675 / C91 / Nm57), this protein is 2,3,4,5-tetrahydropyridine-2,6-dicarboxylate N-succinyltransferase.